The chain runs to 591 residues: MATLLQIGSGVIYSNALRKTLRRPQSSTCIIVTETTPCNKSPTVQRRSANYQPSRWDHHHLLSVENKFAKDKRVRERDLLKEKVRKMLNDEQKTYLDQLEFIDDLQKLGVSYHFEAEIDNILTSSYKKDRTNIQESDLHATALEFRLFRQHGFNVSEDVFDVFMENCGKFDRDDIYGLISLYEASYLSTKLDKNLQIFIRPFATQQLRDFVDTHSNEDFGSCDMVEIVVQALDMPYYWQMRRLSTRWYIDVYGKRQNYKNLVVVEFAKIDFNIVQAIHQEELKNVSSWWMETGLGKQLYFARDRIVENYFWTIGQIQEPQYGYVRQTMTKINALLTTIDDIYDIYGTLEELQLFTVAFENWDINRLDELPEYMRLCFLVIYNEVNSIACEILRTKNINVIPFLKKSWTDVSKAYLVEAKWYKSGHKPNLEEYMQNARISISSPTIFVHFYCVFSDQLSIQVLETLSQHQQNVVRCSSSVFRLANDLVTSPDELARGDVCKSIQCYMSETGASEDKARSHVRQMINDLWDEMNYEKMAHSSSILHHDFMETVINLARMSQCMYQYGDGHGSPEKAKIVDRVMSLLFNPIPLD.

The transit peptide at 1-45 directs the protein to the chloroplast; that stretch reads MATLLQIGSGVIYSNALRKTLRRPQSSTCIIVTETTPCNKSPTVQ. 5 residues coordinate (2E)-geranyl diphosphate: Arg-302, Asp-339, Asp-343, Arg-481, and Asn-484. Residues Asp-339 and Asp-343 each coordinate Mg(2+). Positions 339–343 match the DDXXD motif motif; that stretch reads DDIYD. Mg(2+)-binding residues include Asn-484, Thr-488, and Glu-492.

This sequence belongs to the terpene synthase family. Tpsb subfamily. Mg(2+) serves as cofactor. The cofactor is Mn(2+). As to expression, predominantly expressed in flowers but also in leaves, siliques and in stems.

Its subcellular location is the plastid. The protein resides in the chloroplast stroma. It carries out the reaction (2E)-geranyl diphosphate = beta-myrcene + diphosphate. It catalyses the reaction (2E)-geranyl diphosphate = tricyclene + diphosphate. The catalysed reaction is (2E)-geranyl diphosphate = (E)-beta-ocimene + diphosphate. It functions in the pathway secondary metabolite biosynthesis; terpenoid biosynthesis. Its function is as follows. Involved in monoterpene (C10) biosynthesis. The major product is beta-myrcene (56%) followed by (E)-beta-ocimene (20%) and minor amounts (less than 5%) of the cyclic monoterpene (-)-limonene, (+)-limonene, 2-carene and tricyclene. The polypeptide is Tricyclene synthase, chloroplastic (Arabidopsis thaliana (Mouse-ear cress)).